The primary structure comprises 153 residues: Ribonuclease H (153 aa).

The RNase H type-1 domain maps to Met-1–Ser-142. Positions 10, 48, 70, and 134 each coordinate Mg(2+).

Belongs to the RNase H family. As to quaternary structure, monomer. Requires Mg(2+) as cofactor.

The protein localises to the cytoplasm. The catalysed reaction is Endonucleolytic cleavage to 5'-phosphomonoester.. Endonuclease that specifically degrades the RNA of RNA-DNA hybrids. This chain is Ribonuclease H, found in Phenylobacterium zucineum (strain HLK1).